We begin with the raw amino-acid sequence, 214 residues long: FMN-dependent NADH:quinone oxidoreductase 1 (214 aa).

Residues 17–19 (SWS) and 144–147 (SAGG) each bind FMN.

The protein belongs to the azoreductase type 1 family. Homodimer. FMN is required as a cofactor.

The catalysed reaction is 2 a quinone + NADH + H(+) = 2 a 1,4-benzosemiquinone + NAD(+). It catalyses the reaction N,N-dimethyl-1,4-phenylenediamine + anthranilate + 2 NAD(+) = 2-(4-dimethylaminophenyl)diazenylbenzoate + 2 NADH + 2 H(+). Its function is as follows. Quinone reductase that provides resistance to thiol-specific stress caused by electrophilic quinones. Also exhibits azoreductase activity. Catalyzes the reductive cleavage of the azo bond in aromatic azo compounds to the corresponding amines. This Lactococcus lactis subsp. lactis (strain IL1403) (Streptococcus lactis) protein is FMN-dependent NADH:quinone oxidoreductase 1.